The chain runs to 195 residues: Large ribosomal subunit protein bL32m (195 aa).

Zn(2+)-binding residues include Cys-95, Cys-98, Cys-108, and Cys-111.

This sequence belongs to the bacterial ribosomal protein bL32 family. In terms of assembly, component of the mitochondrial large ribosomal subunit (mt-LSU).

It is found in the mitochondrion. Functionally, component of the mitochondrial large ribosomal subunit (mt-LSU). The mitochondrial ribosome (mitoribosome) is a large ribonucleoprotein complex responsible for the synthesis of proteins inside mitochondria. This Drosophila melanogaster (Fruit fly) protein is Large ribosomal subunit protein bL32m (mRpL32).